Consider the following 162-residue polypeptide: Selenoprotein F (162 aa).

An N-terminal signal peptide occupies residues 1-28 (MAAGQGGWLRPALGLRLLLATAFQAVSA). Residue Sec-93 is a non-standard amino acid, selenocysteine.

It belongs to the selenoprotein M/F family. Forms a tight complex with UGGT1/UGCGL1. Interacts with UGGT2/UGCGL2. Interacts with RDH11.

It is found in the endoplasmic reticulum lumen. May be involved in redox reactions associated with the formation of disulfide bonds. May contribute to the quality control of protein folding in the endoplasmic reticulum. May regulate protein folding by enhancing the catalytic activity of UGGT1/UGCGL1 and UGGT2/UGCGL2. The chain is Selenoprotein F from Mus musculus (Mouse).